The primary structure comprises 412 residues: Multifunctional CCA protein (412 aa).

ATP is bound by residues Gly8 and Arg11. CTP is bound by residues Gly8 and Arg11. 2 residues coordinate Mg(2+): Asp21 and Asp23. Residues Arg91, Arg137, and Arg140 each contribute to the ATP site. 3 residues coordinate CTP: Arg91, Arg137, and Arg140. Residues 225–326 form the HD domain; that stretch reads TGIHVMMVID…ADMLQATDAY (102 aa).

This sequence belongs to the tRNA nucleotidyltransferase/poly(A) polymerase family. Bacterial CCA-adding enzyme type 1 subfamily. As to quaternary structure, monomer. Can also form homodimers and oligomers. Mg(2+) is required as a cofactor. It depends on Ni(2+) as a cofactor.

The catalysed reaction is a tRNA precursor + 2 CTP + ATP = a tRNA with a 3' CCA end + 3 diphosphate. It catalyses the reaction a tRNA with a 3' CCA end + 2 CTP + ATP = a tRNA with a 3' CCACCA end + 3 diphosphate. Functionally, catalyzes the addition and repair of the essential 3'-terminal CCA sequence in tRNAs without using a nucleic acid template. Adds these three nucleotides in the order of C, C, and A to the tRNA nucleotide-73, using CTP and ATP as substrates and producing inorganic pyrophosphate. tRNA 3'-terminal CCA addition is required both for tRNA processing and repair. Also involved in tRNA surveillance by mediating tandem CCA addition to generate a CCACCA at the 3' terminus of unstable tRNAs. While stable tRNAs receive only 3'-terminal CCA, unstable tRNAs are marked with CCACCA and rapidly degraded. This Nitrosomonas europaea (strain ATCC 19718 / CIP 103999 / KCTC 2705 / NBRC 14298) protein is Multifunctional CCA protein.